Here is a 155-residue protein sequence, read N- to C-terminus: Small ribosomal subunit protein uS7 (155 aa).

It belongs to the universal ribosomal protein uS7 family. As to quaternary structure, part of the 30S ribosomal subunit. Contacts proteins S9 and S11.

Its function is as follows. One of the primary rRNA binding proteins, it binds directly to 16S rRNA where it nucleates assembly of the head domain of the 30S subunit. Is located at the subunit interface close to the decoding center, probably blocks exit of the E-site tRNA. The chain is Small ribosomal subunit protein uS7 from Desulforapulum autotrophicum (strain ATCC 43914 / DSM 3382 / VKM B-1955 / HRM2) (Desulfobacterium autotrophicum).